The following is an 832-amino-acid chain: Protein wech (832 aa).

Residues 1–14 (MMELLSNNSVPQQM) are compositionally biased toward polar residues. Residues 1 to 42 (MMELLSNNSVPQQMASSNAPSANNVAHSSTANGSGGGSVSSN) are disordered. Residues 15-32 (ASSNAPSANNVAHSSTAN) show a composition bias toward low complexity. Ser107 is subject to Phosphoserine. B box-type zinc fingers lie at residues 118–163 (NSSI…IVSL) and 184–224 (SGNF…YASI). Positions 123, 126, 145, 149, 189, 192, 211, and 216 each coordinate Zn(2+). Phosphoserine occurs at positions 470, 475, and 506. NHL repeat units lie at residues 537–580 (SLSF…FNPD), 584–627 (KFKF…FTAS), 631–674 (LLKF…FDSE), 680–722 (QIVF…IDPD), and 727–770 (LSVK…FNQN).

In terms of assembly, interacts with the head domain of rhea and the kinase domain of Ilk. Interacts with AGO1. Interacts with mei-P26. As to expression, expressed in ovarian germline stem cells (at protein level). Expressed ubiquitously in all epithelial cells during early stages of embryogenesis. Specifically expressed at epidermal muscle attachment site.

In terms of biological role, vital for larval development. Plays a role in tumor formation. A crucial component for the physical link between integrins and the cytoskeleton in the epidermal muscle attachment sites. The chain is Protein wech (wech) from Drosophila melanogaster (Fruit fly).